The following is a 153-amino-acid chain: Ribonuclease H (153 aa).

Residues 7 to 148 (PADLVEMWTD…ADMLANQGVA (142 aa)) enclose the RNase H type-1 domain. Residues Asp16, Glu54, Asp76, and Asp140 each contribute to the Mg(2+) site.

The protein belongs to the RNase H family. In terms of assembly, monomer. The cofactor is Mg(2+).

The protein localises to the cytoplasm. It carries out the reaction Endonucleolytic cleavage to 5'-phosphomonoester.. In terms of biological role, endonuclease that specifically degrades the RNA of RNA-DNA hybrids. The chain is Ribonuclease H from Bordetella avium (strain 197N).